We begin with the raw amino-acid sequence, 857 residues long: Aminopeptidase N (857 aa).

Substrate is bound by residues Glu-130 and 264-268 (GAMEN). Residue His-298 participates in Zn(2+) binding. Residue Glu-299 is the Proton acceptor of the active site. Residues His-302 and Glu-321 each contribute to the Zn(2+) site.

This sequence belongs to the peptidase M1 family. Monomer. Zn(2+) serves as cofactor. Post-translationally, the N-terminus is blocked.

The protein localises to the cytoplasm. It carries out the reaction Release of an N-terminal amino acid, Xaa-|-Yaa- from a peptide, amide or arylamide. Xaa is preferably Ala, but may be most amino acids including Pro (slow action). When a terminal hydrophobic residue is followed by a prolyl residue, the two may be released as an intact Xaa-Pro dipeptide.. Functionally, aminopeptidase with broad substrate specificity to several peptides. Shows strong preference for leucine but also cleaves next to Arg and Lys in peptide-bond-containing substrates. This is Aminopeptidase N (pepN) from Streptomyces lividans.